Reading from the N-terminus, the 385-residue chain is T-box transcription factor TBX10 (385 aa).

The tract at residues 22-61 is disordered; sequence TTSSGWEPRLGSPFPSGPCTSSTGAQAVAEPTGQGPKNPR. A DNA-binding region (T-box) is located at residues 69–252; sequence LEMKPLWEEF…SNPFAKGFRE (184 aa).

The protein localises to the nucleus. Its function is as follows. Probable transcriptional regulator involved in developmental processes. The chain is T-box transcription factor TBX10 (TBX10) from Homo sapiens (Human).